The following is a 293-amino-acid chain: 4-hydroxy-tetrahydrodipicolinate synthase (293 aa).

A pyruvate-binding site is contributed by threonine 50. Catalysis depends on tyrosine 138, which acts as the Proton donor/acceptor. The active-site Schiff-base intermediate with substrate is the lysine 166. Residue valine 206 participates in pyruvate binding.

The protein belongs to the DapA family. Homotetramer; dimer of dimers.

The protein localises to the cytoplasm. It carries out the reaction L-aspartate 4-semialdehyde + pyruvate = (2S,4S)-4-hydroxy-2,3,4,5-tetrahydrodipicolinate + H2O + H(+). The protein operates within amino-acid biosynthesis; L-lysine biosynthesis via DAP pathway; (S)-tetrahydrodipicolinate from L-aspartate: step 3/4. Functionally, catalyzes the condensation of (S)-aspartate-beta-semialdehyde [(S)-ASA] and pyruvate to 4-hydroxy-tetrahydrodipicolinate (HTPA). The sequence is that of 4-hydroxy-tetrahydrodipicolinate synthase from Cutibacterium acnes (strain DSM 16379 / KPA171202) (Propionibacterium acnes).